We begin with the raw amino-acid sequence, 87 residues long: uncharacterized protein (87 aa).

This is an uncharacterized protein from Autographa californica nuclear polyhedrosis virus (AcMNPV).